We begin with the raw amino-acid sequence, 142 residues long: Sorting nexin-3 (142 aa).

Positions 21 to 138 (NFLEIEVRNP…AAFVQDPNWD (118 aa)) constitute a PX domain. A 1,2-diacyl-sn-glycero-3-phospho-(1D-myo-inositol-3-phosphate) contacts are provided by R64, S66, K90, R95, and R104.

It belongs to the sorting nexin family.

It localises to the cytoplasm. It is found in the golgi apparatus membrane. The protein resides in the prevacuolar compartment membrane. In terms of biological role, required for retention of late Golgi membrane proteins. Component of the retrieval machinery that functions by direct interaction with the cytosolic tails of certain TGN membrane proteins during the sorting/budding process at the prevacuolar compartment. Binds phosphatidylinositol 3-phosphate (PtdIns(P3)). The polypeptide is Sorting nexin-3 (snx-3) (Neurospora crassa (strain ATCC 24698 / 74-OR23-1A / CBS 708.71 / DSM 1257 / FGSC 987)).